The primary structure comprises 68 residues: Large ribosomal subunit protein bL35 (68 aa).

This sequence belongs to the bacterial ribosomal protein bL35 family.

This chain is Large ribosomal subunit protein bL35, found in Rickettsia felis (strain ATCC VR-1525 / URRWXCal2) (Rickettsia azadi).